Reading from the N-terminus, the 146-residue chain is Hemoglobin subunit beta (146 aa).

Residue valine 1 is modified to N-acetylvaline. The 145-residue stretch at histidine 2–histidine 146 folds into the Globin domain. Threonine 12 is modified (phosphothreonine). Residue serine 44 is modified to Phosphoserine. Lysine 59 bears the N6-acetyllysine mark. Histidine 63 lines the heme b pocket. The residue at position 82 (lysine 82) is an N6-acetyllysine. A heme b-binding site is contributed by histidine 92. Cysteine 93 carries the post-translational modification S-nitrosocysteine. Lysine 144 is subject to N6-acetyllysine.

The protein belongs to the globin family. In terms of assembly, heterotetramer of two alpha chains and two beta chains. In terms of tissue distribution, red blood cells.

Involved in oxygen transport from the lung to the various peripheral tissues. This chain is Hemoglobin subunit beta (HBB), found in Theropithecus gelada (Gelada baboon).